The primary structure comprises 554 residues: Dihydroxy-acid dehydratase (554 aa).

Asp-78 lines the Mg(2+) pocket. Cys-119 is a [2Fe-2S] cluster binding site. Positions 120 and 121 each coordinate Mg(2+). Residue Lys-121 is modified to N6-carboxylysine. [2Fe-2S] cluster is bound at residue Cys-191. Glu-444 contacts Mg(2+). The Proton acceptor role is filled by Ser-470.

The protein belongs to the IlvD/Edd family. In terms of assembly, homodimer. The cofactor is [2Fe-2S] cluster. It depends on Mg(2+) as a cofactor.

It carries out the reaction (2R)-2,3-dihydroxy-3-methylbutanoate = 3-methyl-2-oxobutanoate + H2O. It catalyses the reaction (2R,3R)-2,3-dihydroxy-3-methylpentanoate = (S)-3-methyl-2-oxopentanoate + H2O. It functions in the pathway amino-acid biosynthesis; L-isoleucine biosynthesis; L-isoleucine from 2-oxobutanoate: step 3/4. Its pathway is amino-acid biosynthesis; L-valine biosynthesis; L-valine from pyruvate: step 3/4. Functionally, functions in the biosynthesis of branched-chain amino acids. Catalyzes the dehydration of (2R,3R)-2,3-dihydroxy-3-methylpentanoate (2,3-dihydroxy-3-methylvalerate) into 2-oxo-3-methylpentanoate (2-oxo-3-methylvalerate) and of (2R)-2,3-dihydroxy-3-methylbutanoate (2,3-dihydroxyisovalerate) into 2-oxo-3-methylbutanoate (2-oxoisovalerate), the penultimate precursor to L-isoleucine and L-valine, respectively. The polypeptide is Dihydroxy-acid dehydratase (Nitratidesulfovibrio vulgaris (strain ATCC 29579 / DSM 644 / CCUG 34227 / NCIMB 8303 / VKM B-1760 / Hildenborough) (Desulfovibrio vulgaris)).